Reading from the N-terminus, the 97-residue chain is NADH-quinone oxidoreductase subunit K (97 aa).

3 consecutive transmembrane segments (helical) span residues 1–21 (MSEY…GVLY), 25–45 (ILVM…LMVY), and 57–77 (VFVF…LAIL).

The protein belongs to the complex I subunit 4L family. In terms of assembly, NDH-1 is composed of 14 different subunits. Subunits NuoA, H, J, K, L, M, N constitute the membrane sector of the complex.

The protein resides in the cell inner membrane. The catalysed reaction is a quinone + NADH + 5 H(+)(in) = a quinol + NAD(+) + 4 H(+)(out). NDH-1 shuttles electrons from NADH, via FMN and iron-sulfur (Fe-S) centers, to quinones in the respiratory chain. The immediate electron acceptor for the enzyme in this species is believed to be a menaquinone. Couples the redox reaction to proton translocation (for every two electrons transferred, four hydrogen ions are translocated across the cytoplasmic membrane), and thus conserves the redox energy in a proton gradient. The polypeptide is NADH-quinone oxidoreductase subunit K (Cytophaga hutchinsonii (strain ATCC 33406 / DSM 1761 / CIP 103989 / NBRC 15051 / NCIMB 9469 / D465)).